Reading from the N-terminus, the 922-residue chain is Protein translocase subunit SecA (922 aa).

Residues Gln-87, 105–109, and Asp-516 contribute to the ATP site; that span reads GEGKT. The disordered stretch occupies residues 867-912; sequence YTAPTETGEPETLPDPRTAGAGGDGLNLPEGVRIGRNDPCPCGSGK. Residues Cys-906, Cys-908, Cys-917, and His-918 each contribute to the Zn(2+) site.

The protein belongs to the SecA family. Monomer and homodimer. Part of the essential Sec protein translocation apparatus which comprises SecA, SecYEG and auxiliary proteins SecDF-YajC and YidC. Zn(2+) is required as a cofactor.

The protein resides in the cell inner membrane. The protein localises to the cytoplasm. It catalyses the reaction ATP + H2O + cellular proteinSide 1 = ADP + phosphate + cellular proteinSide 2.. Part of the Sec protein translocase complex. Interacts with the SecYEG preprotein conducting channel. Has a central role in coupling the hydrolysis of ATP to the transfer of proteins into and across the cell membrane, serving both as a receptor for the preprotein-SecB complex and as an ATP-driven molecular motor driving the stepwise translocation of polypeptide chains across the membrane. In Paracidovorax citrulli (strain AAC00-1) (Acidovorax citrulli), this protein is Protein translocase subunit SecA.